We begin with the raw amino-acid sequence, 292 residues long: Coiled-coil domain-containing protein 137 (292 aa).

Low complexity predominate over residues M1–T16. Disordered stretches follow at residues M1–A94, F139–A183, P205–S243, and A263–L292. 3 stretches are compositionally biased toward basic and acidic residues: residues K57–M78, P155–K164, and K173–A183. Residues K156 to T194 are a coiled coil. A compositionally biased stretch (low complexity) spans K222–S232. Position 232 is a phosphoserine (S232). Over residues G234–S243 the composition is skewed to polar residues. A coiled-coil region spans residues Q247–S276.

Its subcellular location is the chromosome. The protein is Coiled-coil domain-containing protein 137 (CCDC137) of Bos taurus (Bovine).